We begin with the raw amino-acid sequence, 548 residues long: Membrane protein insertase YidC (548 aa).

A helical transmembrane segment spans residues 6 to 26 (NLLVIALLFVSFMIWQAWEQD). The disordered stretch occupies residues 28–56 (NPQPQTQQTTQTTTTAAGSAADQGVPASG). The segment covering 29 to 42 (PQPQTQQTTQTTTT) has biased composition (low complexity). Helical transmembrane passes span 350–370 (FVGN…GIMY), 424–444 (FPLI…MGSI), 458–478 (LSAQ…MFFI), and 499–519 (PVIF…YYIV).

The protein belongs to the OXA1/ALB3/YidC family. Type 1 subfamily. As to quaternary structure, interacts with the Sec translocase complex via SecD. Specifically interacts with transmembrane segments of nascent integral membrane proteins during membrane integration.

The protein localises to the cell inner membrane. Required for the insertion and/or proper folding and/or complex formation of integral membrane proteins into the membrane. Involved in integration of membrane proteins that insert both dependently and independently of the Sec translocase complex, as well as at least some lipoproteins. Aids folding of multispanning membrane proteins. This Salmonella dublin (strain CT_02021853) protein is Membrane protein insertase YidC.